Reading from the N-terminus, the 284-residue chain is NADH-cytochrome b5 reductase 1 (284 aa).

The helical transmembrane segment at 8–28 threads the bilayer; that stretch reads PLFVFSTIAIIISTFVIFYFV. Residues 41–144 enclose the FAD-binding FR-type domain; the sequence is DTFQKFPLIE…RGPKGFFTYT (104 aa). Residues 124–139 and 150–182 each bind FAD; these read DSKKVGEYVEIRGPKG and SFGMIAGGTGIAPMYQIITAILRNPADKTKISL.

It belongs to the flavoprotein pyridine nucleotide cytochrome reductase family. As to quaternary structure, monomer. Component of the 2-(3-amino-3-carboxypropyl)histidine synthase complex composed of DPH1, DPH2, DPH3 and a NADH-dependent reductase, predominantly CBR1. Requires FAD as cofactor.

It is found in the mitochondrion outer membrane. It catalyses the reaction 2 Fe(III)-[cytochrome b5] + NADH = 2 Fe(II)-[cytochrome b5] + NAD(+) + H(+). The enzyme catalyses 2 Fe(3+)-[Dph3] + NADH = 2 Fe(2+)-[Dph3] + NAD(+) + H(+). The protein operates within protein modification; peptidyl-diphthamide biosynthesis. Its function is as follows. NADH-dependent reductase for DPH3 and cytochrome b5. Required for the first step of diphthamide biosynthesis, a post-translational modification of histidine which occurs in elongation factor 2. DPH1 and DPH2 transfer a 3-amino-3-carboxypropyl (ACP) group from S-adenosyl-L-methionine (SAM) to a histidine residue, the reaction is assisted by a reduction system comprising DPH3 and a NADH-dependent reductase, predominantly CBR1. By reducing DPH3, also involved in the formation of the tRNA wobble base modification mcm5s 2U (5-methoxycarbonylmethyl-2-thiouridine), mediated by the elongator complex. The cytochrome b5/NADH cytochrome b5 reductase electron transfer system supports the catalytic activity of several sterol biosynthetic enzymes. The protein is NADH-cytochrome b5 reductase 1 (CBR1) of Scheffersomyces stipitis (strain ATCC 58785 / CBS 6054 / NBRC 10063 / NRRL Y-11545) (Yeast).